Here is a 299-residue protein sequence, read N- to C-terminus: GTPase Era (299 aa).

Residues 4–171 (KSGFVAILGR…ISLLTDNLEE (168 aa)) form the Era-type G domain. Positions 12-19 (GRPNVGKS) are G1. A GTP-binding site is contributed by 12-19 (GRPNVGKS). The interval 38-42 (QTTRN) is G2. Residues 59-62 (DTPG) are G3. Residues 59-63 (DTPGI) and 121-124 (NKID) contribute to the GTP site. A G4 region spans residues 121-124 (NKID). Residues 150–152 (ISA) form a G5 region. The region spanning 202 to 280 (TQQEIPHSVA…YLETWVKVKK (79 aa)) is the KH type-2 domain.

Belongs to the TRAFAC class TrmE-Era-EngA-EngB-Septin-like GTPase superfamily. Era GTPase family. In terms of assembly, monomer.

It localises to the cytoplasm. The protein resides in the cell membrane. An essential GTPase that binds both GDP and GTP, with rapid nucleotide exchange. Plays a role in 16S rRNA processing and 30S ribosomal subunit biogenesis and possibly also in cell cycle regulation and energy metabolism. This chain is GTPase Era, found in Streptococcus uberis (strain ATCC BAA-854 / 0140J).